The chain runs to 504 residues: Probable periplasmic serine endoprotease DegP-like (504 aa).

Residues 1–26 (MLKTTTVAGLAAVLLTTGLPAEVAQS) form the signal peptide. A compositionally biased stretch (basic and acidic residues) spans 102–118 (RADRWRDRRGPRGEGRL). The interval 102-122 (RADRWRDRRGPRGEGRLRPRA) is disordered. Residues 113–286 (RGEGRLRPRA…PASVAKDVVD (174 aa)) are serine protease. Active-site charge relay system residues include His-140, Asp-170, and Ser-244. Substrate-binding positions include 242–244 (GNS) and 299–303 (LGVQI). 2 PDZ domains span residues 287-378 (SLIK…LWRS) and 401-491 (ATGE…IEAQ). Disordered regions lie at residues 389–411 (GTLP…DEGQ) and 428–447 (EDGK…AGDR).

Belongs to the peptidase S1C family.

The protein resides in the periplasm. The catalysed reaction is Acts on substrates that are at least partially unfolded. The cleavage site P1 residue is normally between a pair of hydrophobic residues, such as Val-|-Val.. Might be efficient in the degradation of transiently denatured and unfolded proteins which accumulate in the periplasm following stress conditions. The polypeptide is Probable periplasmic serine endoprotease DegP-like (degP1) (Rhizobium meliloti (strain 1021) (Ensifer meliloti)).